The primary structure comprises 136 residues: Histone H3.3 (136 aa).

Residues 1 to 42 (MARTKQTARKSTGGKAPRKQLASKAARKSAPVSGGVKKPHRY) form a disordered region. Lysine 5 carries the N6,N6,N6-trimethyllysine; alternate modification. An N6,N6-dimethyllysine; alternate modification is found at lysine 5. N6-methyllysine; alternate occurs at positions 5 and 10. Lysine 10 is modified (N6-acetyllysine; alternate). Phosphoserine is present on serine 11. Residue lysine 15 is modified to N6,N6-dimethyllysine; alternate. 5 positions are modified to N6-acetyllysine; alternate: lysine 15, lysine 19, lysine 24, lysine 28, and lysine 37. Lysine 19, lysine 24, lysine 28, and lysine 37 each carry N6-methyllysine; alternate. N6,N6,N6-trimethyllysine; alternate occurs at positions 28 and 37. 2 positions are modified to N6,N6-dimethyllysine; alternate: lysine 28 and lysine 37. N6-acetyllysine is present on residues lysine 57 and lysine 65. Residue lysine 80 is modified to N6,N6,N6-trimethyllysine; alternate. An N6,N6-dimethyllysine; alternate modification is found at lysine 80. Position 80 is an N6-methyllysine; alternate (lysine 80).

Belongs to the histone H3 family. The nucleosome is a histone octamer containing two molecules each of H2A, H2B, H3 and H4 assembled in one H3-H4 heterotetramer and two H2A-H2B heterodimers. The octamer wraps approximately 147 bp of DNA. In terms of processing, phosphorylated to form H3S10ph. H3S10ph promotes subsequent H3K14ac formation and is required for transcriptional activation through TBP recruitment to the promoters. Mono-, di- and trimethylated by the COMPASS complex to form H3K4me1/2/3. H3K4me activates gene expression by regulating transcription elongation and plays a role in telomere length maintenance. H3K4me enrichment correlates with transcription levels, and occurs in a 5' to 3' gradient with H3K4me3 enrichment at the 5'-end of genes, shifting to H3K4me2 and then H3K4me1. Methylated by SET2 to form H3K36me. H3K36me represses gene expression. Methylated by DOT1 to form H3K79me. H3K79me is required for association of SIR proteins with telomeric regions and for telomeric silencing. The COMPASS-mediated formation of H3K4me2/3 and the DOT1-mediated formation of H3K79me require H2BK123ub1. Post-translationally, acetylation of histone H3 leads to transcriptional activation. H3K14ac formation by GCN5 is promoted by H3S10ph. H3K14ac can also be formed by ESA1. H3K56ac formation occurs predominantly in newly synthesized H3 molecules during G1, S and G2/M of the cell cycle and may be involved in DNA repair.

The protein resides in the nucleus. It is found in the chromosome. Functionally, core component of nucleosome. Nucleosomes wrap and compact DNA into chromatin, limiting DNA accessibility to the cellular machineries which require DNA as a template. Histones thereby play a central role in transcription regulation, DNA repair, DNA replication and chromosomal stability. DNA accessibility is regulated via a complex set of post-translational modifications of histones, also called histone code, and nucleosome remodeling. In Lodderomyces elongisporus (strain ATCC 11503 / CBS 2605 / JCM 1781 / NBRC 1676 / NRRL YB-4239) (Yeast), this protein is Histone H3.3 (HHT3).